Consider the following 231-residue polypeptide: Putative histone H1.9 (231 aa).

An H15 domain is found at 113-177; that stretch reads QKPSTSKVIL…GSAGSFTLGK (65 aa). Phosphoserine is present on serine 135. Residues 177 to 214 form a disordered region; sequence KKQASKSKLKVKRQRQQRWRSGQRPFGQHRSLLGSKQG. Residues 179–194 show a composition bias toward basic residues; the sequence is QASKSKLKVKRQRQQR.

This sequence belongs to the histone H1/H5 family. Expressed exclusively in the testis.

It is found in the nucleus. It localises to the chromosome. DNA-binding protein that may be implicated in chromatin remodeling and/or transcriptional regulation during spermiogenesis, the process of spermatid maturation into spermatozoa. The polypeptide is Putative histone H1.9 (Homo sapiens (Human)).